The chain runs to 80 residues: Cell division protein ZapB (80 aa).

Residues 3-80 are a coiled coil; the sequence is FEVLEQLESK…ALLGKMDEVE (78 aa).

Belongs to the ZapB family. In terms of assembly, homodimer. The ends of the coiled-coil dimer bind to each other, forming polymers. Interacts with FtsZ.

The protein resides in the cytoplasm. In terms of biological role, non-essential, abundant cell division factor that is required for proper Z-ring formation. It is recruited early to the divisome by direct interaction with FtsZ, stimulating Z-ring assembly and thereby promoting cell division earlier in the cell cycle. Its recruitment to the Z-ring requires functional FtsA or ZipA. The protein is Cell division protein ZapB of Vibrio parahaemolyticus serotype O3:K6 (strain RIMD 2210633).